Reading from the N-terminus, the 385-residue chain is Glutamate 5-kinase (385 aa).

Lys17 lines the ATP pocket. Substrate is bound by residues Ser64, Asp151, and Asn165. An ATP-binding site is contributed by 185–186; that stretch reads SD. The 77-residue stretch at 291 to 367 folds into the PUA domain; it reads SGTVRVDAGA…DQIENVLGYS (77 aa).

This sequence belongs to the glutamate 5-kinase family.

It is found in the cytoplasm. The catalysed reaction is L-glutamate + ATP = L-glutamyl 5-phosphate + ADP. It participates in amino-acid biosynthesis; L-proline biosynthesis; L-glutamate 5-semialdehyde from L-glutamate: step 1/2. Its function is as follows. Catalyzes the transfer of a phosphate group to glutamate to form L-glutamate 5-phosphate. The chain is Glutamate 5-kinase from Methanosarcina mazei (strain ATCC BAA-159 / DSM 3647 / Goe1 / Go1 / JCM 11833 / OCM 88) (Methanosarcina frisia).